The sequence spans 120 residues: Large ribosomal subunit protein uL18 (120 aa).

This sequence belongs to the universal ribosomal protein uL18 family. Part of the 50S ribosomal subunit; part of the 5S rRNA/L5/L18/L25 subcomplex. Contacts the 5S and 23S rRNAs.

In terms of biological role, this is one of the proteins that bind and probably mediate the attachment of the 5S RNA into the large ribosomal subunit, where it forms part of the central protuberance. The protein is Large ribosomal subunit protein uL18 of Methylorubrum extorquens (strain CM4 / NCIMB 13688) (Methylobacterium extorquens).